The primary structure comprises 460 residues: Chromosomal replication initiator protein DnaA (460 aa).

The domain I, interacts with DnaA modulators stretch occupies residues 1-73 (MEISIDSLWS…ANVVQSILGH (73 aa)). The interval 73–116 (HPVEIYITVAKGEEFEEIGGGGAWELPTTNSIYETPNQNRQPNT) is domain II. The interval 117-333 (ELNAKYVFSR…GALTRALAYI (217 aa)) is domain III, AAA+ region. Gly161, Gly163, Lys164, and Thr165 together coordinate ATP. Positions 334–460 (SIWGLPMTVA…MNSRSRKPSL (127 aa)) are domain IV, binds dsDNA.

This sequence belongs to the DnaA family. As to quaternary structure, oligomerizes as a right-handed, spiral filament on DNA at oriC.

The protein localises to the cytoplasm. In terms of biological role, plays an essential role in the initiation and regulation of chromosomal replication. ATP-DnaA binds to the origin of replication (oriC) to initiate formation of the DNA replication initiation complex once per cell cycle. Binds the DnaA box (a 9 base pair repeat at the origin) and separates the double-stranded (ds)DNA. Forms a right-handed helical filament on oriC DNA; dsDNA binds to the exterior of the filament while single-stranded (ss)DNA is stabiized in the filament's interior. The ATP-DnaA-oriC complex binds and stabilizes one strand of the AT-rich DNA unwinding element (DUE), permitting loading of DNA polymerase. After initiation quickly degrades to an ADP-DnaA complex that is not apt for DNA replication. Binds acidic phospholipids. This is Chromosomal replication initiator protein DnaA from Trichormus variabilis (strain ATCC 29413 / PCC 7937) (Anabaena variabilis).